Here is a 706-residue protein sequence, read N- to C-terminus: B-cell lymphoma 6 protein (706 aa).

The 68-residue stretch at 32 to 99 folds into the BTB domain; it reads TDVVIVVSRE…MYTSRLNLRE (68 aa). The segment at 317–349 is disordered; it reads EPPNAPLNRKGLVSPQSPQKSDCQPNSPTESCS. Residues 330–349 show a composition bias toward polar residues; it reads SPQSPQKSDCQPNSPTESCS. S333 and S343 each carry phosphoserine; by MAPK1. Residue S361 is modified to Phosphoserine. Positions 376-379 are required for interaction with NuRD complex and for transcriptional repressor activity; that stretch reads KKYK. K379 is subject to N6-acetyllysine. The residue at position 404 (S404) is a Phosphoserine. The tract at residues 407–467 is disordered; that stretch reads AYTAPPACQP…PRSSSESHSP (61 aa). Positions 424–456 are enriched in polar residues; the sequence is DLQSPTKLSASGEDSTIPQASRLNNIVNRSMTG. The span at 457–466 shows a compositional bias: low complexity; the sequence is SPRSSSESHS. 6 C2H2-type zinc fingers span residues 518-541, 546-568, 574-596, 602-624, 630-652, and 658-681; these read FFCN…LQTH, YKCD…KTVH, YRCN…TRIH, YKCE…VLIH, YPCE…LRIH, and YHCE…RQKH.

As to quaternary structure, homodimer. Interacts (via BTB domain) with the corepressors BCOR, NCOR1 and SMRT/NCOR2; the interactions are direct. Forms preferably ternary complexes with BCOR and SMRT/NCOR2 on target gene promoters but, on enhancer elements, interacts with SMRT/NCOR2 and HDAC3 to repress proximal gene expression. Interacts with histone deacetylases HDAC2, HDAC5 and HDAC9 (via the catalytic domain). Interacts with ZBTB7 and BCL6B. Interacts with SCF(FBXO11) complex; the interaction is independent of phosphorylation and promotes ubiquitination. Interacts (when phosphorylated) with PIN1; the interaction is required for BCL6 degradation upon genotoxic stress. Interacts with ZBTB17; inhibits ZBTB17 transcriptional activity. Interacts with CTBP1, autoinhibits its transcriptional expression. Interacts with NOTCH1 NCID and SIRT1; leads to a epigenetic repression of selective NOTCH1-target genes. Interacts (nor via BTB domain neither acetylated) with the NuRD complex components CHD4, HDAC1, MBD3 and MTA3; the interaction with MTA3 inhibits BCL6 acetylation and is required for BCL6 transpriptional repression. In terms of processing, phosphorylated by MAPK1 in response to antigen receptor activation at Ser-333 and Ser-343. Phosphorylated by ATM in response to genotoxic stress. Phosphorylation induces its degradation by ubiquitin/proteasome pathway. Polyubiquitinated. Polyubiquitinated by SCF(FBXO11), leading to its degradation by the proteasome. Ubiquitinated by the SCF(FBXL17) complex, leading to its degradation by the proteasome: ubiquitination by the SCF(FBXL17) complex takes place when aberrant BTB domain dimers are formed. Post-translationally, acetylated at Lys-379 by EP300 which inhibits the interaction with NuRD complex and the transcriptional repressor function. Deacetylated by HDAC- and SIR2-dependent pathways. As to expression, expressed in germinal center T- and B-cells and in primary immature dendritic cells.

The protein localises to the nucleus. Its function is as follows. Transcriptional repressor mainly required for germinal center (GC) formation and antibody affinity maturation which has different mechanisms of action specific to the lineage and biological functions. Forms complexes with different corepressors and histone deacetylases to repress the transcriptional expression of different subsets of target genes. Represses its target genes by binding directly to the DNA sequence 5'-TTCCTAGAA-3' (BCL6-binding site) or indirectly by repressing the transcriptional activity of transcription factors. In GC B-cells, represses genes that function in differentiation, inflammation, apoptosis and cell cycle control, also autoregulates its transcriptional expression and up-regulates, indirectly, the expression of some genes important for GC reactions, such as AICDA, through the repression of microRNAs expression, like miR155. An important function is to allow GC B-cells to proliferate very rapidly in response to T-cell dependent antigens and tolerate the physiological DNA breaks required for immunglobulin class switch recombination and somatic hypermutation without inducing a p53/TP53-dependent apoptotic response. In follicular helper CD4(+) T-cells (T(FH) cells), promotes the expression of T(FH)-related genes but inhibits the differentiation of T(H)1, T(H)2 and T(H)17 cells. Also required for the establishment and maintenance of immunological memory for both T- and B-cells. Suppresses macrophage proliferation through competition with STAT5 for STAT-binding motifs binding on certain target genes, such as CCL2 and CCND2. In response to genotoxic stress, controls cell cycle arrest in GC B-cells in both p53/TP53-dependedent and -independent manners. Besides, also controls neurogenesis through the alteration of the composition of NOTCH-dependent transcriptional complexes at selective NOTCH targets, such as HES5, including the recruitment of the deacetylase SIRT1 and resulting in an epigenetic silencing leading to neuronal differentiation. In Homo sapiens (Human), this protein is B-cell lymphoma 6 protein (BCL6).